A 114-amino-acid polypeptide reads, in one-letter code: Large ribosomal subunit protein bL19 (114 aa).

This sequence belongs to the bacterial ribosomal protein bL19 family.

Functionally, this protein is located at the 30S-50S ribosomal subunit interface and may play a role in the structure and function of the aminoacyl-tRNA binding site. This is Large ribosomal subunit protein bL19 from Lysinibacillus sphaericus (strain C3-41).